The primary structure comprises 546 residues: Chaperonin GroEL (546 aa).

Residues 30–33 (TLGP), K51, 87–91 (DGTTT), G415, 479–481 (NAA), and D495 contribute to the ATP site. Residues 527–546 (DKPAAPPMPGGMGGMGGMDF) are disordered. Residues 536 to 546 (GGMGGMGGMDF) are compositionally biased toward gly residues.

Belongs to the chaperonin (HSP60) family. Forms a cylinder of 14 subunits composed of two heptameric rings stacked back-to-back. Interacts with the co-chaperonin GroES.

It is found in the cytoplasm. It catalyses the reaction ATP + H2O + a folded polypeptide = ADP + phosphate + an unfolded polypeptide.. In terms of biological role, together with its co-chaperonin GroES, plays an essential role in assisting protein folding. The GroEL-GroES system forms a nano-cage that allows encapsulation of the non-native substrate proteins and provides a physical environment optimized to promote and accelerate protein folding. This is Chaperonin GroEL from Bordetella petrii (strain ATCC BAA-461 / DSM 12804 / CCUG 43448).